Consider the following 255-residue polypeptide: Thiazole synthase (255 aa).

Catalysis depends on K96, which acts as the Schiff-base intermediate with DXP. Residues G157, 183 to 184 (AG), and 205 to 206 (NT) each bind 1-deoxy-D-xylulose 5-phosphate.

It belongs to the ThiG family. In terms of assembly, homotetramer. Forms heterodimers with either ThiH or ThiS.

The protein localises to the cytoplasm. It catalyses the reaction [ThiS sulfur-carrier protein]-C-terminal-Gly-aminoethanethioate + 2-iminoacetate + 1-deoxy-D-xylulose 5-phosphate = [ThiS sulfur-carrier protein]-C-terminal Gly-Gly + 2-[(2R,5Z)-2-carboxy-4-methylthiazol-5(2H)-ylidene]ethyl phosphate + 2 H2O + H(+). Its pathway is cofactor biosynthesis; thiamine diphosphate biosynthesis. Functionally, catalyzes the rearrangement of 1-deoxy-D-xylulose 5-phosphate (DXP) to produce the thiazole phosphate moiety of thiamine. Sulfur is provided by the thiocarboxylate moiety of the carrier protein ThiS. In vitro, sulfur can be provided by H(2)S. The chain is Thiazole synthase from Bacillus pumilus (strain SAFR-032).